A 266-amino-acid chain; its full sequence is Type III pantothenate kinase (266 aa).

6–13 (DVGNSHTV) is a binding site for ATP. 112–115 (GIDR) is a binding site for substrate. The active-site Proton acceptor is Asp114. Residue Asp134 coordinates K(+). Residue Thr137 participates in ATP binding. Thr190 is a binding site for substrate.

The protein belongs to the type III pantothenate kinase family. In terms of assembly, homodimer. Requires NH4(+) as cofactor. K(+) is required as a cofactor.

It localises to the cytoplasm. It catalyses the reaction (R)-pantothenate + ATP = (R)-4'-phosphopantothenate + ADP + H(+). It participates in cofactor biosynthesis; coenzyme A biosynthesis; CoA from (R)-pantothenate: step 1/5. Its function is as follows. Catalyzes the phosphorylation of pantothenate (Pan), the first step in CoA biosynthesis. The polypeptide is Type III pantothenate kinase (Desulfotalea psychrophila (strain LSv54 / DSM 12343)).